Consider the following 351-residue polypeptide: Peptide chain release factor 1 (351 aa).

N5-methylglutamine is present on Gln233.

This sequence belongs to the prokaryotic/mitochondrial release factor family. Post-translationally, methylated by PrmC. Methylation increases the termination efficiency of RF1.

It localises to the cytoplasm. Its function is as follows. Peptide chain release factor 1 directs the termination of translation in response to the peptide chain termination codons UAG and UAA. The sequence is that of Peptide chain release factor 1 from Treponema pallidum subsp. pallidum (strain SS14).